Consider the following 551-residue polypeptide: uncharacterized protein (551 aa).

Over residues 1–11 the composition is skewed to polar residues; that stretch reads MRRVSLPNQLN. 2 disordered regions span residues 1–22 and 523–551; these read MRRVSLPNQLNETRRRSPTRGE and CDPTVDASGYEPHDQQPQQQQQQQQQAFH. Positions 12–22 are enriched in basic and acidic residues; the sequence is ETRRRSPTRGE. The span at 537-551 shows a compositional bias: low complexity; it reads QQPQQQQQQQQQAFH.

This sequence to Synechocystis PCC 6803 sll0335 and to M.tuberculosis Rv2567.

This is an uncharacterized protein from Mycobacterium bovis (strain ATCC BAA-935 / AF2122/97).